Reading from the N-terminus, the 332-residue chain is MAKEPVRVLVTGAAGQIGYALVPMIARGIMLGADQPVILHMLDIPPAAEALNGVKMELIDAAFPLLKGVVATTDAVEGCTGVNVAVMVGGFPRKEGMERKDVMSKNVSIYKSQAAALEKHAAPNCKVLVVANPANTNALILKEFAPSIPEKNISCLTRLDHNRALGQISERLSVPVSDVKNVIIWGNHSSSQYPDVNHAKVQTSSGEKPVRELVKDDAWLDGEFISTVQQRGAAIIKARKLSSALSAASSACDHIRDWVLGTPEGTFVSMGVYSDGSYSVPSGLIYSFPVTCRNGDWSIVQGLPIDEVSRKKMDLTAEELKEEKDLAYSCLS.

Residues 16–17 (QI) and D43 each bind NAD(+). M56 carries the post-translational modification Methionine sulfoxide. Position 90 (G90) interacts with NAD(+). M97 is subject to Methionine sulfoxide. An oxaloacetate-binding site is contributed by R99. NAD(+) is bound at residue Q113. K119 is covalently cross-linked (Glycyl lysine isopeptide (Lys-Gly) (interchain with G-Cter in ubiquitin)). N132 serves as a coordination point for NAD(+). 4 residues coordinate oxaloacetate: N132, R163, H188, and S243. H188 acts as the Proton acceptor in catalysis.

This sequence belongs to the LDH/MDH superfamily. MDH type 2 family. Forms a homodimer. Forms a disulfide-linked homodimer upon oxidation. Interacts with 14-3-3-like proteins GRF1 GRF3 and GRF8. Interacts with TRX1, TRX2, TRX3, TRX4 and TRX5. As to expression, expressed in rosette leaves.

Its subcellular location is the cytoplasm. It catalyses the reaction (S)-malate + NAD(+) = oxaloacetate + NADH + H(+). Decreased activity upon treatment with hydrogen peroxide. Catalyzes a reversible NAD-dependent dehydrogenase reaction involved in central metabolism and redox homeostasis between organellar compartments. The protein is Malate dehydrogenase 1, cytoplasmic (MDH1) of Arabidopsis thaliana (Mouse-ear cress).